The following is a 534-amino-acid chain: Pentatricopeptide repeat-containing protein At2g20540 (534 aa).

11 PPR repeats span residues 41–71 (SSFM…VSNP), 72–106 (NVFL…SFEL), 108–142 (DRFT…GPRF), 143–173 (HVVT…MYER), 174–208 (DVIS…TIVS), 209–239 (WTAM…GIEP), 240–274 (DEIS…GFLK), 275–305 (QTGV…MEGK), 306–340 (DVIS…KVKP), 341–371 (NGIT…MRQD), and 377–407 (KIEH…MPMK). The tract at residues 412 to 487 (IWGSLLSSCR…TPGGSLIEVN (76 aa)) is type E motif. A type E(+) motif region spans residues 488–518 (NIVQEFVSGDNSKPFWTEISIVLQLFTSHQD).

Belongs to the PPR family. PCMP-E subfamily.

This is Pentatricopeptide repeat-containing protein At2g20540 (PCMP-E78) from Arabidopsis thaliana (Mouse-ear cress).